The following is a 51-amino-acid chain: Insulin (51 aa).

3 disulfide bridges follow: C7/C37, C19/C50, and C36/C41.

It belongs to the insulin family. Heterodimer of a B chain and an A chain linked by two disulfide bonds.

It is found in the secreted. Its function is as follows. Insulin decreases blood glucose concentration. It increases cell permeability to monosaccharides, amino acids and fatty acids. It accelerates glycolysis, the pentose phosphate cycle, and glycogen synthesis in liver. This is Insulin (INS) from Ptyas dhumnades (Big-eyed ratsnake).